Consider the following 602-residue polypeptide: Lysine--tRNA ligase, chloroplastic/mitochondrial (602 aa).

Residues 50-62 (SSSSSSATTAETS) are compositionally biased toward low complexity. Residues 50 to 83 (SSSSSSATTAETSKPSGRNRRSASSSNSTSDREA) are disordered. Residues 136-214 (VSIAGRVVAR…SICVNSFSIL (79 aa)) constitute a DNA-binding region (OB). Substrate contacts are provided by glycine 285 and glutamate 309. ATP contacts are provided by residues 331–333 (RNE) and 339–340 (HN). Glutamate 347 and tyrosine 349 together coordinate substrate. Positions 492 and 499 each coordinate Ca(2+). An ATP-binding site is contributed by 499-500 (EM). 2 residues coordinate substrate: asparagine 502 and glutamate 506. Basic and acidic residues predominate over residues 524–543 (HNAKRAEAVRESPEPNAKKD). Positions 524–550 (HNAKRAEAVRESPEPNAKKDDDDDESY) are disordered. Residue 575–578 (GIDR) coordinates ATP.

This sequence belongs to the class-II aminoacyl-tRNA synthetase family. It depends on Ca(2+) as a cofactor.

It localises to the plastid. The protein localises to the chloroplast. It is found in the mitochondrion. It carries out the reaction tRNA(Lys) + L-lysine + ATP = L-lysyl-tRNA(Lys) + AMP + diphosphate. In terms of biological role, catalyzes the specific attachment of an amino acid to its cognate tRNA in a 2 step reaction: the amino acid (AA) is first activated by ATP to form AA-AMP and then transferred to the acceptor end of the tRNA. The polypeptide is Lysine--tRNA ligase, chloroplastic/mitochondrial (Arabidopsis thaliana (Mouse-ear cress)).